The primary structure comprises 117 residues: NADH dehydrogenase [ubiquinone] 1 beta subcomplex subunit 9 (117 aa).

Serine 2 is subject to N-acetylserine.

Belongs to the complex I LYR family. Complex I is composed of at least 49 different subunits. Expressed in roots, stems, flowers, rosette leaves, cauline leaves and siliques, with the highest expression in the stems.

It localises to the mitochondrion inner membrane. In terms of biological role, accessory subunit of the mitochondrial membrane respiratory chain NADH dehydrogenase (Complex I), that is believed to be not involved in catalysis. Complex I functions in the transfer of electrons from NADH to the respiratory chain. The immediate electron acceptor for the enzyme is believed to be ubiquinone. Is required for correct plant growth and development. This is NADH dehydrogenase [ubiquinone] 1 beta subcomplex subunit 9 (CIB22) from Arabidopsis thaliana (Mouse-ear cress).